A 304-amino-acid polypeptide reads, in one-letter code: Cell surface-binding protein OPG105 (304 aa).

In terms of domain architecture, Alpha-carbonic anhydrase spans 1 to 235 (MPQQLSPINI…NDDTQVYYSG (235 aa)). Over 1–275 (MPQQLSPINI…YQKYIEENKT (275 aa)) the chain is Virion surface. Residues 276–294 (FAIIAIVFVFILTAILFFM) form a helical membrane-spanning segment. Topologically, residues 295-304 (SRRYSREKQN) are intravirion.

Belongs to the alpha-carbonic anhydrase family. As to quaternary structure, homodimer; disulfide-linked. In terms of processing, apparently non-glycosylated.

It is found in the virion membrane. Functionally, binds to chondroitin sulfate on the cell surface to provide virion attachment to target cell. This is Cell surface-binding protein OPG105 (OPG105) from Homo sapiens (Human).